The primary structure comprises 464 residues: ATP-dependent protease ATPase subunit HslU (464 aa).

ATP-binding positions include Val-19, 61-66 (GVGKTE), Asp-278, Glu-342, and Arg-414.

Belongs to the ClpX chaperone family. HslU subfamily. A double ring-shaped homohexamer of HslV is capped on each side by a ring-shaped HslU homohexamer. The assembly of the HslU/HslV complex is dependent on binding of ATP.

It localises to the cytoplasm. Functionally, ATPase subunit of a proteasome-like degradation complex; this subunit has chaperone activity. The binding of ATP and its subsequent hydrolysis by HslU are essential for unfolding of protein substrates subsequently hydrolyzed by HslV. HslU recognizes the N-terminal part of its protein substrates and unfolds these before they are guided to HslV for hydrolysis. This chain is ATP-dependent protease ATPase subunit HslU, found in Halalkalibacterium halodurans (strain ATCC BAA-125 / DSM 18197 / FERM 7344 / JCM 9153 / C-125) (Bacillus halodurans).